The sequence spans 428 residues: 26S proteasome regulatory subunit 7 (428 aa).

Position 211–218 (211–218 (GPPGTGKT)) interacts with ATP.

Belongs to the AAA ATPase family.

Its subcellular location is the cytoplasm. The protein resides in the nucleus. Functionally, the 26S proteasome is involved in the ATP-dependent degradation of ubiquitinated proteins. The regulatory (or ATPase) complex confers ATP dependency and substrate specificity to the 26S complex. The protein is 26S proteasome regulatory subunit 7 (psmC2) of Dictyostelium discoideum (Social amoeba).